We begin with the raw amino-acid sequence, 234 residues long: MLFLHSVVQGTGTLCTLAAWILLALVMTGCQSSTTSKFQLFSLATNVAQINVGYFNMCVLSANATLICKPQFTGCPGLTSISLTDVRSKFLINEVHPWMIVFSFCVCGVSFLMGVVSSLPLIGRLEFLRNIRISLSFFSFFSILVTALFAHVAVSSFVMAVGNGTQNRVTASLGKKAMIFLWCSMGLVTLTGITDSIILLVTSRTKKIRKTILEKSKVLTPSSSFSSKSSTTKY.

Residues 1–32 (MLFLHSVVQGTGTLCTLAAWILLALVMTGCQS) form the signal peptide. The Extracellular portion of the chain corresponds to 33–96 (STTSKFQLFS…RSKFLINEVH (64 aa)). A helical transmembrane segment spans residues 97 to 117 (PWMIVFSFCVCGVSFLMGVVS). Over 118 to 132 (SLPLIGRLEFLRNIR) the chain is Cytoplasmic. Residues 133–153 (ISLSFFSFFSILVTALFAHVA) form a helical membrane-spanning segment. Topologically, residues 154 to 178 (VSSFVMAVGNGTQNRVTASLGKKAM) are extracellular. A helical membrane pass occupies residues 179–199 (IFLWCSMGLVTLTGITDSIIL). At 200 to 234 (LVTSRTKKIRKTILEKSKVLTPSSSFSSKSSTTKY) the chain is on the cytoplasmic side.

It belongs to the SUR7 family.

Its subcellular location is the cell membrane. It localises to the cell tip. Functionally, cell membrane protein which plays a relevant role in coordinating membrane organization and cell wall remodeling during mating. The sequence is that of Cell fusion protein dni1 (dni1) from Schizosaccharomyces pombe (strain 972 / ATCC 24843) (Fission yeast).